The following is a 569-amino-acid chain: Urease subunit alpha (569 aa).

In terms of domain architecture, Urease spans 132 to 569 (GGIDSHIHFI…LPLAQRYFLF (438 aa)). Ni(2+)-binding residues include His137, His139, and Lys220. Residue Lys220 is modified to N6-carboxylysine. His222 provides a ligand contact to substrate. Residues His249 and His275 each contribute to the Ni(2+) site. His323 (proton donor) is an active-site residue. Residue Asp363 participates in Ni(2+) binding.

It belongs to the metallo-dependent hydrolases superfamily. Urease alpha subunit family. In terms of assembly, heterotrimer of UreA (gamma), UreB (beta) and UreC (alpha) subunits. Three heterotrimers associate to form the active enzyme. Ni cation serves as cofactor. Post-translationally, carboxylation allows a single lysine to coordinate two nickel ions.

The protein localises to the cytoplasm. The enzyme catalyses urea + 2 H2O + H(+) = hydrogencarbonate + 2 NH4(+). It functions in the pathway nitrogen metabolism; urea degradation; CO(2) and NH(3) from urea (urease route): step 1/1. In Dechloromonas aromatica (strain RCB), this protein is Urease subunit alpha.